The following is a 730-amino-acid chain: MISVCPQNDLQKCYRSLTFDVPGQQFEERNEQNLKKRAKKKGSFQPSVAFDTVPSTAGYSSIDDSREGFKGVPVPNYYTMEECYDDETDSFSPNLQYYLRDTFQSSPFLNTRKENKSESSSFPMRSSKLLEKNSDIKKYFLVSKNGKIVRRDYPSTPVIVNETLMINRFEKNWIKLWRQRKLQINERLNDKKKWFTYPELIFSEERIKPLYRGDDSAPCTKEQKRKHKILQQKVGYPNNPKTIVCHINGKKHTWVALDWTVYKFARNLDHIVVITTLPKMISNRKKTAKDDTEWAPGYQKEVIDQKLNDIFDYILQLVKVVKISVKITLEIIVGKIKKSLVDVINVHTPDFLVLATLKHERNENLITYKSKKLTDVFPVSYPIPTFVVPSKRMYSFELNLQREVNEHYVSKNHMKHEHTDVESMSSSMFKKNTISDISSHISVDSYAEDFKRQGYIKKQFNTSNDSIPRKLTGLAQHSRRKITGDIEKLQDDEKDRECTKEKLLLKKIDIIIRESLKSSLAIETLPGKNVSQSSHGDQISSFKNALIGNGSKNTKFRKSLIPYSSSEEQNTTTTIKLSSSPTSQIKFATSVKHKDGRAALGKARNLPDIRHSISFDKENSFDPSDKSSSVDNSIPLRKVKSAGALRKVKTNDSSSSAGSKKSSSSFSTVNTFTGGGVGIFKVFKSGSSSGNKSSSRRNSSSGDVFESDDRNDKKKKKKKKKKSLFLFGKI.

The span at 615-625 shows a compositional bias: basic and acidic residues; the sequence is FDKENSFDPSD. Disordered stretches follow at residues 615-667 and 684-730; these read FDKE…SSFS and KSGS…FGKI. 2 stretches are compositionally biased toward low complexity: residues 653–667 and 684–701; these read SSSS…SSFS and KSGS…NSSS. Residues 713 to 723 show a composition bias toward basic residues; the sequence is KKKKKKKKKKS.

This is an uncharacterized protein from Saccharomyces cerevisiae (strain ATCC 204508 / S288c) (Baker's yeast).